A 588-amino-acid polypeptide reads, in one-letter code: MTAQTVRSLINQVEIAVSAAIDRVLPEAAGADPVVRPSEHADFQSNAALALAKRARTKPADLATAVADALRADGSTAVADVTVSGPGFLNLALADATVWTQVAARLADPRLGIDLPEQSRRTVIDYSGPNIAKEMHVGHLRTTIIGDALARVLGFLGAEVIRQNHLGDWGTQFGMLIQYLDEHPDATWHSDDLAPGTSTVSALDSLYRAARKEFDADPGFADRARARVVALQAGDEDTVARWREIVAESEVAFRQIYDRLGVLLEPSDSAGESFYNDRLLDIVDELTAAGIAQDSEGALVVLSQEVTGPDGDPATLMVRKTDGGYGYDTTDLATIRYRIRDLHADRLLYVVDARQALHFRLVFETARRAGWLTDAVDVAHVAFGTVLGPDGRPFKTRAGDTVKLMDLLDAATGKARATVAEKDHALTDDDLDHIAEAAGIGAVKYADLSTSRTKDYVFDVDRMVSFDGNTGVYLQYAHTRIQSILRKAGDMTATVDVALALHPAERALALQLDAFGGALTEVARLLEPHRLCNYLYELARAFTDFYEACPVLQADPSTRANRLALCHLTARTLRQGLDLLGIAAPERM.

A 'HIGH' region motif is present at residues 129 to 139 (PNIAKEMHVGH).

It belongs to the class-I aminoacyl-tRNA synthetase family. As to quaternary structure, monomer.

The protein resides in the cytoplasm. It carries out the reaction tRNA(Arg) + L-arginine + ATP = L-arginyl-tRNA(Arg) + AMP + diphosphate. In Frankia casuarinae (strain DSM 45818 / CECT 9043 / HFP020203 / CcI3), this protein is Arginine--tRNA ligase.